The following is a 466-amino-acid chain: 3-isopropylmalate dehydratase large subunit (466 aa).

The [4Fe-4S] cluster site is built by Cys347, Cys407, and Cys410.

The protein belongs to the aconitase/IPM isomerase family. LeuC type 1 subfamily. In terms of assembly, heterodimer of LeuC and LeuD. [4Fe-4S] cluster is required as a cofactor.

The catalysed reaction is (2R,3S)-3-isopropylmalate = (2S)-2-isopropylmalate. The protein operates within amino-acid biosynthesis; L-leucine biosynthesis; L-leucine from 3-methyl-2-oxobutanoate: step 2/4. Catalyzes the isomerization between 2-isopropylmalate and 3-isopropylmalate, via the formation of 2-isopropylmaleate. The chain is 3-isopropylmalate dehydratase large subunit from Acidiphilium cryptum (strain JF-5).